We begin with the raw amino-acid sequence, 1486 residues long: MIERGKFRSLTLINWNGFFARTFDLDELVTTLSGGNGAGKSTTMAAFVTALIPDLTLLHFRNTTEAGATSGSRDKGLHGKLKAGVCYSMLDTINSRHQRVVVGVRLQQVAGRDRKVDIKPFAIQGLPMSVQPTQLVTETLSERQARVLPLNELKDKLEAMEGVQFKQFNSITDYHSLMFDLGIIARRLRSASDRSKFYRLIEASLYGGISSAITRSLRDYLLPENSGVRKAFQDMEAALRENRMTLEAIRVTQSDRDLFKHLISEATNYVAADYMRHANERRVHLDKALEFRRELHTSRQQLAAEQYKHVDMARELAEHNGAEGDLEADYQAASDHLNLVQTALRQQEKIERYEADLDELQIRLEEQNEVVAEAIERQEENEARAEAAELEVDELKSQLADYQQALDVQQTRAIQYNQAIAALNRAKELCHLPDLTADSAAEWLETFQAKELEATEKMLSLEQKMSMAQTAHSQFEQAYQLVVAINGPLARNEAWDVARELLREGVDQRHLAEQVQPLRMRLSELEQRLREQQEAERLLADFCKRQGKNFDIDELEALHQELEARIASLSDSVSNAREERMTLRQEQEQLQSRIQSLMRRAPVWLAAQNSLNQLSEQCGEEFSSSQDVTEYLQQLLEREREAIVERDEVGARKNAVDEEIERLSQPGGSEDQRLNALAERFGGVLLSEIYDDVSLEDAPYFSALYGPSRHAIVVPDLSQVTEHLEGLTDCPEDLYLIEGDPQSFDDSVFSVDELEKAVVVKIADRQWRYSRFPEVPLFGRAARESRIESLHAEREVLSERFATLSFDVQKTQRLHQAFSRFIGSHLAVAFESDPEAEIRQLNSRRVELERALSNHENDNQQQRIQFEQAKEGVTALNRILPRLNLLADDSLADRVDEIRERLDEAQEAARFVQQFGNQLAKLEPIVSVLQSDPEQFEQLKEDYAYSQQMQRDARQQAFALTEVVQRRAHFSYSDSAEMLSGNSDLNEKLRERLEQAEAERTRAREALRGHAAQLSQYNQVLASLKSSYDTKKELLNDLQRELQDIGVRADSGAEERARIRRDELHAQLSNNRSRRNQLEKALTFCEAEMDNLTRKLRKLERDYFEMREQVVTAKAGWCAVMRMVKDNGVERRLHRRELAYLSADDLRSMSDKALGALRLAVADNEHLRDVLRMSEDPKRPERKIQFFVAVYQHLRERIRQDIIRTDDPVEAIEQMEIELSRLTEELTSREQKLAISSRSVANIIRKTIQREQNRIRMLNQGLQNVSFGQVNSVRLNVNVRETHAMLLDVLSEQHEQHQDLFNSNRLTFSEALAKLYQRLNPQIDMGQRTPQTIGEELLDYRNYLEMEVEVNRGSDGWLRAESGALSTGEAIGTGMSILVMVVQSWEDESRRLRGKDISPCRLLFLDEAARLDARSIATLFELCERLQMQLIIAAPENISPEKGTTYKLVRKVFQNTEHVHVVGLRGFAPQLPETLPGSDEAPSQAS.

34-41 (GGNGAGKS) serves as a coordination point for ATP. Coiled coils occupy residues 326 to 418 (LEAD…QYNQ), 444 to 480 (LETFQAKELEATEKMLSLEQKMSMAQTAHSQFEQAYQ), and 509 to 603 (RHLA…RAPV). The flexible hinge stretch occupies residues 666–783 (PGGSEDQRLN…EVPLFGRAAR (118 aa)). Coiled coils occupy residues 835–923 (EAEI…AKLE), 977–1115 (EMLS…TAKA), and 1209–1266 (VEAI…QNVS).

It belongs to the SMC family. MukB subfamily. Homodimerization via its hinge domain. Binds to DNA via its C-terminal region. Interacts, and probably forms a ternary complex, with MukE and MukF via its C-terminal region. The complex formation is stimulated by calcium or magnesium. Interacts with tubulin-related protein FtsZ.

It localises to the cytoplasm. The protein resides in the nucleoid. Its function is as follows. Plays a central role in chromosome condensation, segregation and cell cycle progression. Functions as a homodimer, which is essential for chromosome partition. Involved in negative DNA supercoiling in vivo, and by this means organize and compact chromosomes. May achieve or facilitate chromosome segregation by condensation DNA from both sides of a centrally located replisome during cell division. This chain is Chromosome partition protein MukB, found in Escherichia coli (strain SMS-3-5 / SECEC).